The chain runs to 156 residues: Small ribosomal subunit protein uS7 (156 aa).

This sequence belongs to the universal ribosomal protein uS7 family. Part of the 30S ribosomal subunit. Contacts proteins S9 and S11.

Functionally, one of the primary rRNA binding proteins, it binds directly to 16S rRNA where it nucleates assembly of the head domain of the 30S subunit. Is located at the subunit interface close to the decoding center, probably blocks exit of the E-site tRNA. This is Small ribosomal subunit protein uS7 from Listeria innocua serovar 6a (strain ATCC BAA-680 / CLIP 11262).